The chain runs to 363 residues: Anhydro-N-acetylmuramic acid kinase (363 aa).

Gly-9–Asp-16 serves as a coordination point for ATP.

Belongs to the anhydro-N-acetylmuramic acid kinase family.

It catalyses the reaction 1,6-anhydro-N-acetyl-beta-muramate + ATP + H2O = N-acetyl-D-muramate 6-phosphate + ADP + H(+). The protein operates within amino-sugar metabolism; 1,6-anhydro-N-acetylmuramate degradation. Its pathway is cell wall biogenesis; peptidoglycan recycling. In terms of biological role, catalyzes the specific phosphorylation of 1,6-anhydro-N-acetylmuramic acid (anhMurNAc) with the simultaneous cleavage of the 1,6-anhydro ring, generating MurNAc-6-P. Is required for the utilization of anhMurNAc either imported from the medium or derived from its own cell wall murein, and thus plays a role in cell wall recycling. This is Anhydro-N-acetylmuramic acid kinase from Nitrosomonas europaea (strain ATCC 19718 / CIP 103999 / KCTC 2705 / NBRC 14298).